The following is a 289-amino-acid chain: Probable vesicular-fusion protein sec17 homolog (289 aa).

Ser-76 is subject to Phosphoserine.

Belongs to the SNAP family.

It localises to the membrane. Functionally, required for vesicular transport between the endoplasmic reticulum and the Golgi apparatus. The sequence is that of Probable vesicular-fusion protein sec17 homolog (sec17) from Schizosaccharomyces pombe (strain 972 / ATCC 24843) (Fission yeast).